The primary structure comprises 344 residues: 2,3,4,5-tetrahydropyridine-2,6-dicarboxylate N-succinyltransferase (344 aa).

Glutamate 205 serves as a coordination point for Mg(2+). The active-site Acyl-anhydride intermediate is the glutamate 221. Succinyl-CoA-binding positions include arginine 223, glycine 238, serine 241, alanine 264, 279–280 (EA), 287–289 (GTK), lysine 304, and 317–320 (RRNS).

The protein belongs to the type 2 tetrahydrodipicolinate N-succinyltransferase family. Homotrimer. Magnesium ions are not essential for catalysis. serves as cofactor.

Its subcellular location is the cytoplasm. It catalyses the reaction (S)-2,3,4,5-tetrahydrodipicolinate + succinyl-CoA + H2O = (S)-2-succinylamino-6-oxoheptanedioate + CoA. It functions in the pathway amino-acid biosynthesis; L-lysine biosynthesis via DAP pathway; LL-2,6-diaminopimelate from (S)-tetrahydrodipicolinate (succinylase route): step 1/3. Weakly inhibited by D-2-aminopimelate. Its function is as follows. Catalyzes the conversion of the cyclic tetrahydrodipicolinate (THDP) into the acyclic N-succinyl-L-2-amino-6-oxopimelate using succinyl-CoA. Displays succinyl transferase activity with L-2-aminopimelate and succinyl-CoA as substrates. This is 2,3,4,5-tetrahydropyridine-2,6-dicarboxylate N-succinyltransferase from Pseudomonas aeruginosa (strain ATCC 15692 / DSM 22644 / CIP 104116 / JCM 14847 / LMG 12228 / 1C / PRS 101 / PAO1).